The following is a 330-amino-acid chain: Protein LEG1 homolog (330 aa).

An N-terminal signal peptide occupies residues 1-20 (MAFLPSWVCVLVGSFSASLA). N24 and N69 each carry an N-linked (GlcNAc...) asparagine glycan.

This sequence belongs to the LEG1 family. In terms of tissue distribution, detected in saliva and in hypomineralized dental enamel (at protein level).

It is found in the secreted. Its function is as follows. May be involved in early liver development. The protein is Protein LEG1 homolog of Homo sapiens (Human).